The primary structure comprises 500 residues: Na(+)/H(+) antiporter NhaB (500 aa).

The next 13 helical transmembrane spans lie at 11–31 (HGFL…FLVL), 34–54 (LLLV…EFIF), 58–78 (MALK…ALLL), 96–116 (VILL…LLLF), 129–149 (AILS…LDAL), 150–170 (TVTA…HRVA), 205–225 (LLMH…VGEP), 241–261 (FFFK…LTCV), 311–331 (ILII…LMVI), 350–370 (FQDA…VAVI), 394–414 (MLYL…VATI), 450–470 (ATPN…APLI), and 477–497 (MVWM…WAVT).

It belongs to the NhaB Na(+)/H(+) (TC 2.A.34) antiporter family.

The protein resides in the cell inner membrane. The enzyme catalyses 2 Na(+)(in) + 3 H(+)(out) = 2 Na(+)(out) + 3 H(+)(in). Functionally, na(+)/H(+) antiporter that extrudes sodium in exchange for external protons. This is Na(+)/H(+) antiporter NhaB from Pseudomonas putida (strain GB-1).